We begin with the raw amino-acid sequence, 387 residues long: Patatin group D-3 (387 aa).

Residues 1-23 form the signal peptide; sequence MATTKSFLILIVMILATTSSTFA. In terms of domain architecture, PNPLA spans 32 to 230; that stretch reads LSIDGGGIKG…TVADPALLSI (199 aa). Positions 36 to 41 match the GXGXXG motif; it reads GGGIKG. The GXSXG signature appears at 75 to 79; the sequence is GTSTG. The Nucleophile role is filled by Ser-77. An N-linked (GlcNAc...) asparagine glycan is attached at Asn-115. Asp-216 (proton acceptor) is an active-site residue. Residues 216 to 218 carry the DGA/G motif; the sequence is DGA. A coiled-coil region spans residues 361–385; the sequence is ETYEEALKRFAKLLSDRKKLRANKA.

Belongs to the patatin family. Tuber.

The protein resides in the vacuole. In terms of biological role, probable lipolytic acyl hydrolase (LAH), an activity which is thought to be involved in the response of tubers to pathogens. This is Patatin group D-3 from Solanum tuberosum (Potato).